A 105-amino-acid chain; its full sequence is Thioredoxin (105 aa).

Residues 1-105 (MASNVTDKSF…SLIEWINNNI (105 aa)) form the Thioredoxin domain. The cysteines at positions 30 and 33 are disulfide-linked.

Belongs to the thioredoxin family.

Component of the thioredoxin-thioredoxin reductase system. Participates in various redox reactions through the reversible oxidation of its active center dithiol to a disulfide and catalyzes dithiol-disulfide exchange reactions. This is Thioredoxin (trxA) from Rickettsia bellii (strain RML369-C).